We begin with the raw amino-acid sequence, 126 residues long: Hydrogenase maturation factor HypA (126 aa).

Ni(2+) is bound at residue histidine 2. The Zn(2+) site is built by cysteine 78, cysteine 81, cysteine 97, and cysteine 100.

It belongs to the HypA/HybF family.

Functionally, involved in the maturation of [NiFe] hydrogenases. Required for nickel insertion into the metal center of the hydrogenase. This is Hydrogenase maturation factor HypA from Methanococcus maripaludis (strain C6 / ATCC BAA-1332).